We begin with the raw amino-acid sequence, 486 residues long: MASMSLSFSSSLCSSRIPEGKRRFRHRDVGIVRCVLAASKSSPGSVTKKRLWKDGEFPGITEPVNQRRTPIKNVKKKLDRRSKANGWVNTVTETLSDLIAKKQWLQALEVFDMLREQTFYQPKEGTYMKLLVLLGKSGQPNRAQKLFDEMLEEGLEPTVELYTALLAAYTRSNLIDDAFSILDKMKSFPQCQPDVFTYSTLLKACVDASQFDLVDSLYKEMDERLITPNTVTQNIVLSGYGRVGRFDQMEKVLSDMLVSTACKPDVWTMNIILSVFGNMGKIDMMESWYEKFRNFGIEPETRTFNILIGSYGKKRMYDKMSSVMEYMRKLEFPWTTSTYNNIIEAFADVGDAKNMELTFDQMRSEGMKADTKTFCCLINGYANAGLFHKVISSVQLAAKFEIPENTAFYNAVISACAKADDLIEMERVYIRMKERQCVCDSRTFEIMVEAYEKEGMNDKIYYLEQERQKLMDRTVATKEMENLPAG.

Residues 1-36 constitute a chloroplast transit peptide; it reads MASMSLSFSSSLCSSRIPEGKRRFRHRDVGIVRCVL. PPR repeat units follow at residues 123–157, 158–188, 194–228, 229–264, 265–299, 300–334, 335–369, 370–404, 405–439, and 440–470; these read KEGTYMKLLVLLGKSGQPNRAQKLFDEMLEEGLEP, TVELYTALLAAYTRSNLIDDAFSILDKMKSF, DVFTYSTLLKACVDASQFDLVDSLYKEMDERLITP, NTVTQNIVLSGYGRVGRFDQMEKVLSDMLVSTACKP, DVWTMNIILSVFGNMGKIDMMESWYEKFRNFGIEP, ETRTFNILIGSYGKKRMYDKMSSVMEYMRKLEFPW, TTSTYNNIIEAFADVGDAKNMELTFDQMRSEGMKA, DTKTFCCLINGYANAGLFHKVISSVQLAAKFEIPE, NTAFYNAVISACAKADDLIEMERVYIRMKERQCVC, and DSRTFEIMVEAYEKEGMNDKIYYLEQERQKL.

Belongs to the PPR family. P subfamily.

The protein resides in the plastid. Its subcellular location is the chloroplast. This Arabidopsis thaliana (Mouse-ear cress) protein is Pentatricopeptide repeat-containing protein At3g06430, chloroplastic (EMB2750).